A 187-amino-acid chain; its full sequence is Ribosome-recycling factor (187 aa).

The protein belongs to the RRF family.

Its subcellular location is the cytoplasm. Responsible for the release of ribosomes from messenger RNA at the termination of protein biosynthesis. May increase the efficiency of translation by recycling ribosomes from one round of translation to another. The protein is Ribosome-recycling factor of Flavobacterium psychrophilum (strain ATCC 49511 / DSM 21280 / CIP 103535 / JIP02/86).